The primary structure comprises 1043 residues: MEHEVGMDADISDFTLGADGYVRIWSTEAIYNTGNPEYANKPKQLASMSNHSGTIHTVRFSPNGKYLASGADDKIVCIYTLDANPPSHASTFGSNEAPPVENWRTIRRLIGHDNDVQDLGWSYDSSILVSVGLDSKVVVWSGHTFEKLKTLSIHQSHVKGITFDPANKYFATASDDRTVRIFRFTSPSPNSTAHDQMNNFVLEHTISAPFQNSPLTAYFRRCSWSPDGMHIAAANAVNGPVSSVAIINRGSWDGDINLIGHEAPVEVCAFSPRLYSSQPVSKSAVDNQNHAMQNVTVIACAGGDKSLSIWITSNPRPIVVAQEMAAKSISDLAWSPDGKCLFATALDGTILAVRFEDGELGYPMAMEENEKSLTKFGTNRRGAGIAETTDGLLLEEKSKAGEIKDVEGRMGALMGDGHATAESMVNGKTAPLPSNGATPARGPSPAADTQKAQPNGTAATPAAPEPEKPDPYQAKLERLKQRPTYTKDGKKRIAPLLVSGAGAAESSLPQARLMASVSSQVKADVPQSIVDLSKPFDGLPKGGLSALLFGNKRKLAQLEGDEDGHVEKRVALASQNGATPILANTPDGLLPAQPQPAPTGQQPTPEFIRPAVTNPCMAISQLRLAVPKVRSQIVRAIDSNGRPTEPPSATGEPGKSRADVVFEARNPSPASLTGRAVDREPVRLTLFRGEQPLWQDFLPRTVLLVTGNQSMWSAACEDGSVYIWSPAGRRLVSALVLEAQPVILECNGPWILCISAVGMCYVWNVKHLSSPHPPISLQPVLDAAIHTLGAHPSAAPAITNARINSEGRVVVALSNGEGYSYSPSMYTWQRVSEAWWAVGSQYWNSTEAPVGNLQSAGPQQDKETTAAVSAGIIPFLERNTTNETLLRGRAYFLQRLIKVLLSREGYESFESSVSIAHMENRLAAALSLGAKEEFRLYLSMYAKRLGAEGLKMKVEELLKGLIGGLFEEEDETGTGRRLQANEKEDRNWQESSDTLCGWPREVLLKEVILALGKHRDLQRVTVPYAKLLGVVDNESEDNDAMET.

WD repeat units follow at residues 1–35 (MEHEVGMDADISDFTLGADGYVRIWSTEAIYNTGN), 50–89 (NHSGTIHTVRFSPNGKYLASGADDKIVCIYTLDANPPSHA), 111–150 (GHDNDVQDLGWSYDSSILVSVGLDSKVVVWSGHTFEKLKT), 153–192 (IHQSHVKGITFDPANKYFATASDDRTVRIFRFTSPSPNST), 214–257 (PLTA…GDIN), 260–320 (GHEA…PIVV), and 324–365 (MAAK…YPMA). The disordered stretch occupies residues 424–472 (MVNGKTAPLPSNGATPARGPSPAADTQKAQPNGTAATPAAPEPEKPDPY).

Belongs to the WD repeat HIR1 family.

Its subcellular location is the nucleus. Functionally, required for replication-independent chromatin assembly and for the periodic repression of histone gene transcription during the cell cycle. The sequence is that of Protein hir1 (hir1) from Aspergillus fumigatus (strain ATCC MYA-4609 / CBS 101355 / FGSC A1100 / Af293) (Neosartorya fumigata).